The following is a 192-amino-acid chain: Imidazoleglycerol-phosphate dehydratase (192 aa).

It belongs to the imidazoleglycerol-phosphate dehydratase family.

It localises to the cytoplasm. The enzyme catalyses D-erythro-1-(imidazol-4-yl)glycerol 3-phosphate = 3-(imidazol-4-yl)-2-oxopropyl phosphate + H2O. It participates in amino-acid biosynthesis; L-histidine biosynthesis; L-histidine from 5-phospho-alpha-D-ribose 1-diphosphate: step 6/9. The polypeptide is Imidazoleglycerol-phosphate dehydratase (Vesicomyosocius okutanii subsp. Calyptogena okutanii (strain HA)).